Reading from the N-terminus, the 647-residue chain is Macrolide export ATP-binding/permease protein MacB 2 (647 aa).

Positions 6–244 (IQLKGIERRY…VTPTAAPAGK (239 aa)) constitute an ABC transporter domain. 42-49 (GASGSGKS) is a binding site for ATP. The interval 223-247 (QEDSGRKPAAVPVTPTAAPAGKEGV) is disordered. Over residues 230–242 (PAAVPVTPTAAPA) the composition is skewed to low complexity. The next 4 helical transmembrane spans lie at 273–293 (FLTM…VALG), 527–547 (IAVI…LVSV), 581–601 (LGGM…SLFV), and 610–630 (LFSI…FGYL).

The protein belongs to the ABC transporter superfamily. Macrolide exporter (TC 3.A.1.122) family. Homodimer. Part of the tripartite efflux system MacAB-TolC, which is composed of an inner membrane transporter, MacB, a periplasmic membrane fusion protein, MacA, and an outer membrane component, TolC. The complex forms a large protein conduit and can translocate molecules across both the inner and outer membranes. Interacts with MacA.

The protein resides in the cell inner membrane. Functionally, part of the tripartite efflux system MacAB-TolC. MacB is a non-canonical ABC transporter that contains transmembrane domains (TMD), which form a pore in the inner membrane, and an ATP-binding domain (NBD), which is responsible for energy generation. Confers resistance against macrolides. The sequence is that of Macrolide export ATP-binding/permease protein MacB 2 from Aeromonas hydrophila subsp. hydrophila (strain ATCC 7966 / DSM 30187 / BCRC 13018 / CCUG 14551 / JCM 1027 / KCTC 2358 / NCIMB 9240 / NCTC 8049).